Reading from the N-terminus, the 585-residue chain is MQLDFRNINTLWSSIIVETLSRLGLTTAVICPGSRSTPLTVAFASHSKIDTIPILDERSAAFFALGIAKRTHLPVALICTSGTAGANFYPAVIEGKESQVPLLIFTADRPPELRNCHAGQTIDQVKLYGNYCNWYIELSLPSVEIRLLSYLRQTIIAAWDHALVPYKGIVHLNCPFREPLAPIIEPNIASLCTEVNFDNFFLNIYESNKKRLRTDYLYDHLNHWLSQANGIIIAGVGNSNNTDLYCNQIFRLSTLLNYPVLAEALCPFRNHAQGFPNLINTYDILLRNQKLADELVPDVVIQIGEFPTSKQLREWLTHHQVQHWVIDSRPDSLDPLHNNTYYIRTDIHDLEMEYNKQCIPGKQDLSYLQQWKKINKIINRNIKTTLDKTNELIEAKLPFILSKNLQDKTSIFIANSMPVRYAEFFWMPNKGQFMPYFNRGANGIEGTLSTALGVAYKAKSSLLITGDLALLHDTNGWLIRQHFQGHLTIILINNNGGGIFEMLPIAKEESVFESYFATPQNINFSQLCSTYNVEHILIKNWTQLKRLLNPLPSTGIRVLELQTDRKKDALWLQDNMKKLSMIDNK.

It belongs to the TPP enzyme family. MenD subfamily. As to quaternary structure, homodimer. Mg(2+) serves as cofactor. It depends on Mn(2+) as a cofactor. The cofactor is thiamine diphosphate.

The catalysed reaction is isochorismate + 2-oxoglutarate + H(+) = 5-enolpyruvoyl-6-hydroxy-2-succinyl-cyclohex-3-ene-1-carboxylate + CO2. It participates in quinol/quinone metabolism; 1,4-dihydroxy-2-naphthoate biosynthesis; 1,4-dihydroxy-2-naphthoate from chorismate: step 2/7. The protein operates within cofactor biosynthesis; phylloquinone biosynthesis. Its function is as follows. Catalyzes the thiamine diphosphate-dependent decarboxylation of 2-oxoglutarate and the subsequent addition of the resulting succinic semialdehyde-thiamine pyrophosphate anion to isochorismate to yield 2-succinyl-5-enolpyruvyl-6-hydroxy-3-cyclohexene-1-carboxylate (SEPHCHC). In Crocosphaera subtropica (strain ATCC 51142 / BH68) (Cyanothece sp. (strain ATCC 51142)), this protein is 2-succinyl-5-enolpyruvyl-6-hydroxy-3-cyclohexene-1-carboxylate synthase.